Here is a 467-residue protein sequence, read N- to C-terminus: Polygalacturonase (467 aa).

A signal peptide spans 1 to 27 (MALQRRFFQFVIITLLIPSFILGYTSA). Asp283 acts as the Proton donor in catalysis. A glycan (N-linked (GlcNAc...) asparagine) is linked at Asn290. The active site involves His306.

The protein belongs to the glycosyl hydrolase 28 family.

The protein localises to the secreted. It localises to the cell wall. It carries out the reaction (1,4-alpha-D-galacturonosyl)n+m + H2O = (1,4-alpha-D-galacturonosyl)n + (1,4-alpha-D-galacturonosyl)m.. Functionally, acts in concert with the pectinesterase, in the ripening process. Is involved in cell wall metabolism, specifically in polyuronide degradation. The protein is Polygalacturonase of Actinidia deliciosa (Kiwi).